A 272-amino-acid polypeptide reads, in one-letter code: Phosphoglycolate phosphatase (272 aa).

Residue aspartate 19 is the Nucleophile of the active site. Residues aspartate 19, aspartate 21, and aspartate 182 each coordinate Mg(2+).

Belongs to the HAD-like hydrolase superfamily. CbbY/CbbZ/Gph/YieH family. Requires Mg(2+) as cofactor.

It carries out the reaction 2-phosphoglycolate + H2O = glycolate + phosphate. The protein operates within organic acid metabolism; glycolate biosynthesis; glycolate from 2-phosphoglycolate: step 1/1. In terms of biological role, specifically catalyzes the dephosphorylation of 2-phosphoglycolate. Is involved in the dissimilation of the intracellular 2-phosphoglycolate formed during the DNA repair of 3'-phosphoglycolate ends, a major class of DNA lesions induced by oxidative stress. In Pseudomonas putida (strain ATCC 47054 / DSM 6125 / CFBP 8728 / NCIMB 11950 / KT2440), this protein is Phosphoglycolate phosphatase.